The sequence spans 120 residues: uncharacterized protein (120 aa).

4 consecutive transmembrane segments (helical) span residues 9–29 (WPDF…LFCG), 32–52 (ALMF…ADCL), 68–88 (FVWP…VMAT), and 94–114 (GPEH…SFRF).

It localises to the membrane. This is an uncharacterized protein from Escherichia phage Mu (Bacteriophage Mu).